We begin with the raw amino-acid sequence, 198 residues long: Large ribosomal subunit protein bL21 (198 aa).

Belongs to the bacterial ribosomal protein bL21 family. As to quaternary structure, part of the 50S ribosomal subunit. Contacts protein L20.

Its function is as follows. This protein binds to 23S rRNA in the presence of protein L20. This is Large ribosomal subunit protein bL21 from Ruegeria sp. (strain TM1040) (Silicibacter sp.).